A 565-amino-acid polypeptide reads, in one-letter code: MKLSPSKYLPVLLGTLSLTIANPSADCKCFPGDDCWPSAAEWKALNTSVSGNLIKTVPLGAPCHDPMFKGDVCQSLRQQWQNATIHFASSSSVMAPFFANQSCDPFQPRIRPCELGNYVSYAIAAETTSDVQNAIAFARANHIRLVIRNTGHDYLGRSTGAGALGVWTHHLKNIEFVDWDDDTYTGNAVKLGAGVQGFEVLEAARSRGLVVVGGECPTVGIAGGYSQGGGHSALSTSFGLSVDNVLSWEVITAKGELLTVNKDENPDLFWALRGGGGGTFGVVISMTVKAHPGTITSGASLSFSTDTNSEEAFWAGIQVFQDTLEDMVDAGTMVIHIITNTSFLIAPLTAYNKTEAQVKVIMKPFISSLTSKHVDFDVTYKESKTYYDHYNEFLGPLPYGKIRVGFEQYGGRLIPRSVVPNFTETLRQVTNMGVTWVGVATDVGPFGTRATTSVHPAWRSTLVHALLSTPWDFTKPWHDMIKLQDLMTNVIMPKVEAVTPGSGAYVNEADFRQPNYQDVFWGDNYKDLLEVKEKWDPEHFFFVPKGVGSEIWSIAEDGRMCKSAL.

Residues methionine 1–cysteine 27 form the signal peptide. N-linked (GlcNAc...) asparagine glycosylation is found at asparagine 46, asparagine 82, and asparagine 100. In terms of domain architecture, FAD-binding PCMH-type spans leucine 115–glycine 293. 3 N-linked (GlcNAc...) asparagine glycosylation sites follow: asparagine 340, asparagine 352, and asparagine 421.

It belongs to the oxygen-dependent FAD-linked oxidoreductase family.

The protein operates within mycotoxin biosynthesis. FAD-linked oxidoreductase; part of the gene cluster that mediates the biosynthesis of zearalenone (ZEA), a nonsteroid estrogen that is a contaminant of cereal grains and causes estrogenic disorders in humans and animals. The ZEA backbone is synthesized from a single acetyl-CoA molecule and eight malonyl-CoA molecules. The reducing polyketide synthase ZEA2 is proposed to synthesize a reduced hexaketide intermediate by using different combinations of its reductive domains during each round of condensation. The hexaketide thioester is then transacylated to the non-reducing polyketide synthase ZEA1 and is further condensed with three malonyl-CoAs without reductive tailoring to yield a mixed reduced/unreduced nonaketide. ZEA1 must be able to interact with ZEA2 to facilitate starter-unit acyltransfer and initiate polyketide biosynthesis. ZEA1 also mediates the required C2-C7 cyclization to form the resorcylate core and catalyzes the formation of the macrolactone. ZEB1 is then responsible for the chemical conversion of beta-zearalenonol (beta-ZOL) to ZEA in the biosynthetic pathway. The polypeptide is FAD-linked oxidoreductase ZEB1 (Gibberella zeae (strain ATCC MYA-4620 / CBS 123657 / FGSC 9075 / NRRL 31084 / PH-1) (Wheat head blight fungus)).